We begin with the raw amino-acid sequence, 318 residues long: uncharacterized protein (318 aa).

This is an uncharacterized protein from Schizosaccharomyces pombe (strain 972 / ATCC 24843) (Fission yeast).